The primary structure comprises 146 residues: MKLHELQPAAGSRKAPKRVGRGTGSGLGRNAGKGEKGQNARSGGGVRPGFEGGQMPLYRRLPKRGFTNIFAKKYVSINVDRLNIFENGTEITPEVLLERRVVSKVLDGVKILGNGNLEKSLIVKGCKFSKSAIEKIEAAGGKVEVI.

Residues 1–54 (MKLHELQPAAGSRKAPKRVGRGTGSGLGRNAGKGEKGQNARSGGGVRPGFEGGQ) form a disordered region. Composition is skewed to gly residues over residues 21 to 31 (RGTGSGLGRNA) and 42 to 52 (SGGGVRPGFEG).

Belongs to the universal ribosomal protein uL15 family. As to quaternary structure, part of the 50S ribosomal subunit.

In terms of biological role, binds to the 23S rRNA. This chain is Large ribosomal subunit protein uL15, found in Clostridium botulinum (strain Alaska E43 / Type E3).